We begin with the raw amino-acid sequence, 194 residues long: Dihydrofolate reductase HdrB (194 aa).

One can recognise a DHFR domain in the interval 18-194 (RFVLVAAVAD…ADRGAEESDE (177 aa)). Residues A24 and 30–36 (VIGRDGT) contribute to the NADP(+) site. D44 contributes to the substrate binding site. 62-63 (KT) is a binding site for NADP(+). 2 residues coordinate substrate: R69 and R78. NADP(+) is bound by residues 84–85 (TT) and 123–130 (GGATVYEQ). T141 is a substrate binding site. The interval 173 to 194 (SFVTYERKQPAAADRGAEESDE) is disordered.

The protein belongs to the dihydrofolate reductase family.

It carries out the reaction (6S)-5,6,7,8-tetrahydrofolate + NADP(+) = 7,8-dihydrofolate + NADPH + H(+). It functions in the pathway cofactor biosynthesis; tetrahydrofolate biosynthesis; 5,6,7,8-tetrahydrofolate from 7,8-dihydrofolate: step 1/1. With respect to regulation, maximum activity at KCl concentration of 0.5 M and activity decreases with increasing concentration of KCl. Its function is as follows. Key enzyme in folate metabolism. Catalyzes an essential reaction for de novo glycine and purine synthesis, and for DNA precursor synthesis. This Haloferax volcanii (Halobacterium volcanii) protein is Dihydrofolate reductase HdrB (hdrB).